The sequence spans 195 residues: 7-methyl-GTP pyrophosphatase (195 aa).

The active-site Proton acceptor is the Asp70.

It belongs to the Maf family. YceF subfamily. The cofactor is a divalent metal cation.

The protein localises to the cytoplasm. The catalysed reaction is N(7)-methyl-GTP + H2O = N(7)-methyl-GMP + diphosphate + H(+). Nucleoside triphosphate pyrophosphatase that hydrolyzes 7-methyl-GTP (m(7)GTP). May have a dual role in cell division arrest and in preventing the incorporation of modified nucleotides into cellular nucleic acids. The polypeptide is 7-methyl-GTP pyrophosphatase (Shewanella sp. (strain MR-4)).